We begin with the raw amino-acid sequence, 84 residues long: UPF0457 protein BALH_2270 (84 aa).

The protein belongs to the UPF0457 family.

The sequence is that of UPF0457 protein BALH_2270 from Bacillus thuringiensis (strain Al Hakam).